The following is a 43-amino-acid chain: Lanthionine-containing peptide SapB (43 aa).

A signal peptide spans 1–21; sequence MALLDLQAMDTPAEDSFGELR. 2 consecutive cross-links (lanthionine (Ser-Cys)) follow at residues 24 to 31 and 34 to 41; these read SQVSLLVC and SSLSVVLC. Residues serine 27 and serine 37 each carry the 2,3-didehydroalanine (Ser) modification.

The protein belongs to the lanthionine-containing morphogen protein family. Maturation involves the enzymatic conversion of Ser into dehydrated AA and the formation of thioether bonds with cysteine. This is followed by membrane translocation and cleavage of the modified precursor.

In terms of biological role, lanthionine-containing peptide devoid of antibiotic properties, involved in the formation of aerial mycelium. Suggested to self-assemble at air-water interfaces, thus providing a film of surfactant through which nascent aerial hyphae can emerge. The aerial hyphae differentiate further into spores. This Streptomyces griseus protein is Lanthionine-containing peptide SapB (ramS).